The primary structure comprises 250 residues: Anamorsin homolog 1 (250 aa).

Positions 1 to 104 are N-terminal SAM-like domain; it reads MNLKITINQQ…KKLNIPQQEF (104 aa). The segment at 104 to 149 is linker; the sequence is FNNCYGKYDYIEQKFQNQINFFKQVDINGKQEIIDENELLDDGVQV. [2Fe-2S] cluster contacts are provided by C155, C162, C165, and C167. The fe-S binding site A stretch occupies residues 155-167; sequence CASKPRACANCTC. [4Fe-4S] cluster contacts are provided by C193, C196, C204, and C207. 2 consecutive short sequence motifs (cx2C motif) follow at residues 193–196 and 204–207; these read CGSC and CANC. A fe-S binding site B region spans residues 193 to 207; sequence CGSCYLGDAFRCANC.

The protein belongs to the anamorsin family. Monomer. The cofactor is [2Fe-2S] cluster. [4Fe-4S] cluster is required as a cofactor.

It localises to the cytoplasm. The protein resides in the mitochondrion intermembrane space. In terms of biological role, component of the cytosolic iron-sulfur (Fe-S) protein assembly (CIA) machinery. Required for the maturation of extramitochondrial Fe-S proteins. Part of an electron transfer chain functioning in an early step of cytosolic Fe-S biogenesis, facilitating the de novo assembly of a [4Fe-4S] cluster on the cytosolic Fe-S scaffold complex. Electrons are transferred from NADPH via a FAD- and FMN-containing diflavin oxidoreductase. Together with the diflavin oxidoreductase, also required for the assembly of the diferric tyrosyl radical cofactor of ribonucleotide reductase (RNR), probably by providing electrons for reduction during radical cofactor maturation in the catalytic small subunit. This chain is Anamorsin homolog 1, found in Paramecium tetraurelia.